The sequence spans 98 residues: uncharacterized protein (98 aa).

This sequence belongs to the Rv1128c/1148c/1588c/1702c/1945/3466 family.

This is an uncharacterized protein from Mycobacterium tuberculosis (strain ATCC 25618 / H37Rv).